Here is a 257-residue protein sequence, read N- to C-terminus: N-acetylglucosaminyldiphosphoundecaprenol N-acetyl-beta-D-mannosaminyltransferase (257 aa).

This sequence belongs to the glycosyltransferase 26 family. TagA/TarA subfamily.

The catalysed reaction is UDP-N-acetyl-alpha-D-mannosamine + N-acetyl-alpha-D-glucosaminyl-di-trans,octa-cis-undecaprenyl diphosphate = N-acetyl-beta-D-mannosaminyl-(1-&gt;4)-N-acetyl-alpha-D-glucosaminyl di-trans,octa-cis-undecaprenyl diphosphate + UDP + H(+). It participates in cell wall biogenesis; poly(ribitol phosphate) teichoic acid biosynthesis. In terms of biological role, catalyzes the conversion of GlcNAc-PP-undecaprenol into ManNAc-GlcNAc-PP-undecaprenol, the first committed lipid intermediate in the de novo synthesis of teichoic acid. The polypeptide is N-acetylglucosaminyldiphosphoundecaprenol N-acetyl-beta-D-mannosaminyltransferase (Bacillus spizizenii (strain ATCC 23059 / NRRL B-14472 / W23) (Bacillus subtilis subsp. spizizenii)).